The sequence spans 1006 residues: DNA polymerase (1006 aa).

It belongs to the DNA polymerase type-B family. In terms of assembly, interacts with OPG148. Component of the Uracil-DNA glycosylase(UDG)-OPG148-polymerase complex; OPG148 and OPG116/UDG form a heterodimeric processivity factor that associates with OPG071 to form the processive polymerase holoenzyme.

The catalysed reaction is DNA(n) + a 2'-deoxyribonucleoside 5'-triphosphate = DNA(n+1) + diphosphate. In terms of biological role, catalyzes DNA synthesis. Acquires processivity by associating with a heterodimeric processivity factor comprised of the viral OPG148 and OPG116 proteins, thereby forming the DNA polymerase holoenzyme. Displays 3'- to 5' exonuclease activity. Might participate in viral DNA recombination. Does not perform OPG116/D4synthesis across an abasic site. The protein is DNA polymerase (OPG071) of Monkeypox virus.